A 189-amino-acid chain; its full sequence is ATP synthase subunit b (189 aa).

Residues 23–43 (IEIVLSLVVFGLLLFAVWKFV) form a helical membrane-spanning segment.

The protein belongs to the ATPase B chain family. In terms of assembly, F-type ATPases have 2 components, F(1) - the catalytic core - and F(0) - the membrane proton channel. F(1) has five subunits: alpha(3), beta(3), gamma(1), delta(1), epsilon(1). F(0) has three main subunits: a(1), b(2) and c(10-14). The alpha and beta chains form an alternating ring which encloses part of the gamma chain. F(1) is attached to F(0) by a central stalk formed by the gamma and epsilon chains, while a peripheral stalk is formed by the delta and b chains.

Its subcellular location is the cell membrane. In terms of biological role, f(1)F(0) ATP synthase produces ATP from ADP in the presence of a proton or sodium gradient. F-type ATPases consist of two structural domains, F(1) containing the extramembraneous catalytic core and F(0) containing the membrane proton channel, linked together by a central stalk and a peripheral stalk. During catalysis, ATP synthesis in the catalytic domain of F(1) is coupled via a rotary mechanism of the central stalk subunits to proton translocation. Its function is as follows. Component of the F(0) channel, it forms part of the peripheral stalk, linking F(1) to F(0). This is ATP synthase subunit b from Nocardioides sp. (strain ATCC BAA-499 / JS614).